The primary structure comprises 100 residues: MITKEAAQKIAKLARLKFEEDTVEKFFTQLSTIMDMIDILNEIDCKDIEPLTSVCNMNARMREDAVTSSDLSSELFDNVSGNSTQLAKEVKYFITPKVVE.

The protein belongs to the GatC family. As to quaternary structure, heterotrimer of A, B and C subunits.

The enzyme catalyses L-glutamyl-tRNA(Gln) + L-glutamine + ATP + H2O = L-glutaminyl-tRNA(Gln) + L-glutamate + ADP + phosphate + H(+). It catalyses the reaction L-aspartyl-tRNA(Asn) + L-glutamine + ATP + H2O = L-asparaginyl-tRNA(Asn) + L-glutamate + ADP + phosphate + 2 H(+). Functionally, allows the formation of correctly charged Asn-tRNA(Asn) or Gln-tRNA(Gln) through the transamidation of misacylated Asp-tRNA(Asn) or Glu-tRNA(Gln) in organisms which lack either or both of asparaginyl-tRNA or glutaminyl-tRNA synthetases. The reaction takes place in the presence of glutamine and ATP through an activated phospho-Asp-tRNA(Asn) or phospho-Glu-tRNA(Gln). The chain is Aspartyl/glutamyl-tRNA(Asn/Gln) amidotransferase subunit C from Rickettsia rickettsii (strain Sheila Smith).